A 21-amino-acid chain; its full sequence is Venom peptide Ocy4 (21 aa).

As to expression, expressed by the venom gland.

It is found in the secreted. This chain is Venom peptide Ocy4, found in Opisthacanthus cayaporum (South American scorpion).